Reading from the N-terminus, the 274-residue chain is TIP41-like protein (274 aa).

It belongs to the TIP41 family.

In Dictyostelium discoideum (Social amoeba), this protein is TIP41-like protein (tiprl).